A 162-amino-acid chain; its full sequence is Nitrogen regulatory protein (162 aa).

Residues 12–156 (NVLNQECTRS…EELYEIITEA (145 aa)) form the PTS EIIA type-2 domain. The active-site Tele-phosphohistidine intermediate is H73.

The protein resides in the cytoplasm. Functionally, seems to have a role in regulating nitrogen assimilation. This is Nitrogen regulatory protein (ptsN) from Klebsiella oxytoca.